The sequence spans 454 residues: tRNA modification GTPase MnmE (454 aa).

Positions 23, 80, and 120 each coordinate (6S)-5-formyl-5,6,7,8-tetrahydrofolate. A TrmE-type G domain is found at 216–377; the sequence is TIKIVIAGPP…LKNKILEITT (162 aa). Residue Asn226 participates in K(+) binding. GTP is bound by residues 226 to 231, 245 to 251, and 270 to 273; these read NVGKSS, TNIPGTT, and DTAG. Ser230 contacts Mg(2+). K(+) is bound by residues Thr245, Ile247, and Thr250. Residue Thr251 coordinates Mg(2+). Lys454 provides a ligand contact to (6S)-5-formyl-5,6,7,8-tetrahydrofolate.

This sequence belongs to the TRAFAC class TrmE-Era-EngA-EngB-Septin-like GTPase superfamily. TrmE GTPase family. As to quaternary structure, homodimer. Heterotetramer of two MnmE and two MnmG subunits. K(+) serves as cofactor.

It localises to the cytoplasm. Exhibits a very high intrinsic GTPase hydrolysis rate. Involved in the addition of a carboxymethylaminomethyl (cmnm) group at the wobble position (U34) of certain tRNAs, forming tRNA-cmnm(5)s(2)U34. The polypeptide is tRNA modification GTPase MnmE (Buchnera aphidicola subsp. Cinara cedri (strain Cc)).